Here is a 483-residue protein sequence, read N- to C-terminus: UDP-N-acetylmuramyl-tripeptide synthetase (483 aa).

Serine 43 is a binding site for UDP-N-acetyl-alpha-D-muramoyl-L-alanyl-D-glutamate. An ATP-binding site is contributed by 116 to 122; it reads GTKGKTT. UDP-N-acetyl-alpha-D-muramoyl-L-alanyl-D-glutamate-binding positions include 160–161, serine 187, and arginine 195; that span reads TT. Position 229 is an N6-carboxylysine (lysine 229).

Belongs to the MurCDEF family. MurE subfamily. Post-translationally, carboxylation is probably crucial for Mg(2+) binding and, consequently, for the gamma-phosphate positioning of ATP.

It is found in the cytoplasm. The protein operates within cell wall biogenesis; peptidoglycan biosynthesis. In terms of biological role, catalyzes the addition of an amino acid to the nucleotide precursor UDP-N-acetylmuramoyl-L-alanyl-D-glutamate (UMAG) in the biosynthesis of bacterial cell-wall peptidoglycan. The polypeptide is UDP-N-acetylmuramyl-tripeptide synthetase (Lactococcus lactis subsp. cremoris (strain MG1363)).